The following is a 610-amino-acid chain: Chaperone protein DnaK (610 aa).

At T173 the chain carries Phosphothreonine; by autocatalysis. Positions 579–592 are enriched in low complexity; sequence QQQQAQGANAGQNN. Residues 579–610 form a disordered region; sequence QQQQAQGANAGQNNDSTVEDAEFKEVKDDDKK. Basic and acidic residues predominate over residues 599-610; that stretch reads AEFKEVKDDDKK.

This sequence belongs to the heat shock protein 70 family.

Its function is as follows. Acts as a chaperone. The protein is Chaperone protein DnaK of Staphylococcus aureus (strain bovine RF122 / ET3-1).